Consider the following 317-residue polypeptide: uncharacterized protein (317 aa).

The region spanning 29-86 (IDLNLLTIFEAVYVHKGIVNAAKVLNLTPSAISQSIQKLRVIFPDPLFIRKGQGVTPT) is the HTH lysR-type domain. Positions 46 to 65 (IVNAAKVLNLTPSAISQSIQ) form a DNA-binding region, H-T-H motif.

It belongs to the LysR transcriptional regulatory family.

This is an uncharacterized protein from Escherichia coli (strain K12).